The chain runs to 200 residues: Holliday junction branch migration complex subunit RuvA (200 aa).

The segment at 1 to 64 (MIAKLKGLLD…ENDMRLLGFA (64 aa)) is domain I. Residues 65 to 143 (EASERDWFRL…ALPSAPGGAA (79 aa)) are domain II. Residues 144–154 (MAANPAGGASA) form a flexible linker region. Residues 154-200 (ADAVSALENLGFKPAIAARAVATAQGELGEGASESELIRVALKRAAG) are domain III.

Belongs to the RuvA family. In terms of assembly, homotetramer. Forms an RuvA(8)-RuvB(12)-Holliday junction (HJ) complex. HJ DNA is sandwiched between 2 RuvA tetramers; dsDNA enters through RuvA and exits via RuvB. An RuvB hexamer assembles on each DNA strand where it exits the tetramer. Each RuvB hexamer is contacted by two RuvA subunits (via domain III) on 2 adjacent RuvB subunits; this complex drives branch migration. In the full resolvosome a probable DNA-RuvA(4)-RuvB(12)-RuvC(2) complex forms which resolves the HJ.

It is found in the cytoplasm. Its function is as follows. The RuvA-RuvB-RuvC complex processes Holliday junction (HJ) DNA during genetic recombination and DNA repair, while the RuvA-RuvB complex plays an important role in the rescue of blocked DNA replication forks via replication fork reversal (RFR). RuvA specifically binds to HJ cruciform DNA, conferring on it an open structure. The RuvB hexamer acts as an ATP-dependent pump, pulling dsDNA into and through the RuvAB complex. HJ branch migration allows RuvC to scan DNA until it finds its consensus sequence, where it cleaves and resolves the cruciform DNA. In Erythrobacter litoralis (strain HTCC2594), this protein is Holliday junction branch migration complex subunit RuvA.